Here is a 215-residue protein sequence, read N- to C-terminus: Porin MspC (215 aa).

A signal peptide spans 1–31; the sequence is MKAISRVLIAMISALAAAVAGLFVSAGTSHA.

This sequence belongs to the mycobacterial porin (TC 1.B.24) family. As to quaternary structure, octamers. Probably forms a goblet with the wide end on the exterior of the outer membrane and a central channel. It is not known if mixed oligomers of MspC with other Msp subunits form in vivo.

The protein resides in the cell outer membrane. Its subcellular location is the secreted. It is found in the cell wall. A constitutively expressed secondary porin, forms a water-filled channel which favors the permeation of cations and less efficiently phosphate. There are about 2400 porins in wild-type, 800 in an mspA deletion and 150 in a double mspA-mspC deletion. This is Porin MspC (mspC) from Mycolicibacterium smegmatis (strain ATCC 700084 / mc(2)155) (Mycobacterium smegmatis).